The following is a 531-amino-acid chain: GPI alpha-1,2-mannosyltransferase 3 (531 aa).

N84 carries N-linked (GlcNAc...) asparagine glycosylation. The next 3 membrane-spanning stretches (helical) occupy residues 99–119 (GLRGFSYPLMFAAIYKVLYLL), 124–144 (VWFLIWIPRLAQAVLSGIADV), and 174–196 (YCATRTLTNTMEAVLSTFALYYY). The N-linked (GlcNAc...) asparagine glycan is linked to N204. The next 6 helical transmembrane spans lie at 210–230 (LICVALAFLIRPTAVILWIPL), 249–269 (YLPIGILTLAASLTVDRIFFG), 303–323 (GVPVILCTHLPFFIHGCMVTP), 328–348 (ILLVAVAWTVLTYSALSHKEF), 350–370 (FIYPVLPVCMVFCGFSFSNLK), and 375–395 (AAVGFLVLSNLFPALYTGLIH). 2 N-linked (GlcNAc...) asparagine glycosylation sites follow: N414 and N476.

The protein belongs to the glycosyltransferase 22 family. PIGB subfamily.

It is found in the endoplasmic reticulum membrane. It participates in glycolipid biosynthesis; glycosylphosphatidylinositol-anchor biosynthesis. Its function is as follows. Alpha-1,2-mannosyltransferase that catalyzes the transfer of the third mannose, via an alpha-1,2 bond, from a dolichol-phosphate-mannose (Dol-P-Man) to an alpha-D-Man-(1-&gt;6)-2-PEtn-alpha-D-Man-(1-&gt;4)-alpha-D-GlcN-(1-&gt;6)-(1-radyl,2-acyl-sn-glycero-3-phospho)-2-acyl-inositol intermediate to generate an alpha-D-Man-(1-&gt;2)-alpha-D-Man-(1-&gt;6)-2-PEtn-alpha-D-Man-(1-&gt;4)-alpha-D-GlcN-(1-&gt;6)-(1-radyl,2-acyl-sn-glycero-3-phospho)-2-acyl-inositol (also termed H6) and participates in the nineth step of the glycosylphosphatidylinositol-anchor biosynthesis. May also add the third mannose to an alpha-D-Man-(1-&gt;6)-alpha-D-Man-(1-&gt;4)-alpha-D-GlcN-(1-&gt;6)-(1-radyl,2-acyl-sn-glycero-3-phospho)-2-acyl-inositol (also termed H3) intermediate generating an alpha-D-Man-(1-&gt;2)-alpha-D-Man-(1-&gt;6)-alpha-D-Man-(1-&gt;4)-alpha-D-GlcN-(1-&gt;6)-(1-radyl,2-acyl-sn-glycero-3-phospho)-2-acyl-inositol (also termed H4). The protein is GPI alpha-1,2-mannosyltransferase 3 of Xenopus laevis (African clawed frog).